A 417-amino-acid chain; its full sequence is Gamma-glutamyl phosphate reductase (417 aa).

This sequence belongs to the gamma-glutamyl phosphate reductase family.

The protein localises to the cytoplasm. It carries out the reaction L-glutamate 5-semialdehyde + phosphate + NADP(+) = L-glutamyl 5-phosphate + NADPH + H(+). It functions in the pathway amino-acid biosynthesis; L-proline biosynthesis; L-glutamate 5-semialdehyde from L-glutamate: step 2/2. Catalyzes the NADPH-dependent reduction of L-glutamate 5-phosphate into L-glutamate 5-semialdehyde and phosphate. The product spontaneously undergoes cyclization to form 1-pyrroline-5-carboxylate. This is Gamma-glutamyl phosphate reductase from Cronobacter sakazakii (strain ATCC BAA-894) (Enterobacter sakazakii).